Consider the following 76-residue polypeptide: Small ribosomal subunit protein bS18 (76 aa).

Belongs to the bacterial ribosomal protein bS18 family. As to quaternary structure, part of the 30S ribosomal subunit. Forms a tight heterodimer with protein bS6.

In terms of biological role, binds as a heterodimer with protein bS6 to the central domain of the 16S rRNA, where it helps stabilize the platform of the 30S subunit. This is Small ribosomal subunit protein bS18 from Aeromonas hydrophila subsp. hydrophila (strain ATCC 7966 / DSM 30187 / BCRC 13018 / CCUG 14551 / JCM 1027 / KCTC 2358 / NCIMB 9240 / NCTC 8049).